The sequence spans 207 residues: Large ribosomal subunit protein uL4 (207 aa).

The segment at 52–75 (KNRSAVRGGGKKPWRQKGTGRARQ) is disordered. The segment covering 60 to 71 (GGKKPWRQKGTG) has biased composition (basic residues).

It belongs to the universal ribosomal protein uL4 family. As to quaternary structure, part of the 50S ribosomal subunit.

One of the primary rRNA binding proteins, this protein initially binds near the 5'-end of the 23S rRNA. It is important during the early stages of 50S assembly. It makes multiple contacts with different domains of the 23S rRNA in the assembled 50S subunit and ribosome. Functionally, forms part of the polypeptide exit tunnel. In Limosilactobacillus fermentum (strain NBRC 3956 / LMG 18251) (Lactobacillus fermentum), this protein is Large ribosomal subunit protein uL4.